We begin with the raw amino-acid sequence, 285 residues long: DegV domain-containing protein CA_C3284 (285 aa).

Positions 3–280 (VKILTDSTSC…PGAIGIAYYT (278 aa)) constitute a DegV domain. Ser59 and Ser91 together coordinate hexadecanoate.

Functionally, may bind long-chain fatty acids, such as palmitate, and may play a role in lipid transport or fatty acid metabolism. The chain is DegV domain-containing protein CA_C3284 from Clostridium acetobutylicum (strain ATCC 824 / DSM 792 / JCM 1419 / IAM 19013 / LMG 5710 / NBRC 13948 / NRRL B-527 / VKM B-1787 / 2291 / W).